A 376-amino-acid chain; its full sequence is GDSL esterase/lipase At5g55050 (376 aa).

The signal sequence occupies residues 1 to 29; the sequence is MPTNNTPFLTIFLLFLGLLRFDSFPGLEA. Catalysis depends on Ser-46, which acts as the Nucleophile. N-linked (GlcNAc...) asparagine glycans are attached at residues Asn-134 and Asn-245. Active-site residues include Asp-340 and His-344.

It belongs to the 'GDSL' lipolytic enzyme family.

It is found in the secreted. The polypeptide is GDSL esterase/lipase At5g55050 (Arabidopsis thaliana (Mouse-ear cress)).